The following is a 185-amino-acid chain: DAN domain family member 5 (185 aa).

Residues 1–23 form the signal peptide; sequence MFRSQFTTLLGLFSGAWLPTGSG. The N-linked (GlcNAc...) asparagine glycan is linked to Asn39. 4 disulfides stabilise this stretch: Cys97–Cys144, Cys111–Cys158, Cys121–Cys179, and Cys125–Cys181. Residues 97 to 182 enclose the CTCK domain; sequence CKALSFVQVI…TVLVQKCQCR (86 aa).

It belongs to the DAN family. In terms of tissue distribution, expressed throughout the neural retina and in the photoreceptor nuclear layer. In the retina, widely expressed in inner nuclear layer, as well as in the ganglion cell layer.

It is found in the secreted. Antagonist of the extracellular signaling protein NODAL, which is required for correct left-right patterning during embryonic development. Antagonist of BMP4 signaling. Antagonist of TGF-beta signaling. Independently of its role in left-right axis establishment, plays a role during heart development, possibly through the regulation of TGF-beta/Nodal signaling pathway. Displays anti-angiogenic activity by inhibiting endothelial sprouting, migration, and proliferation. Once internalized by endothelial cells, may alter their redox and glycolytic balance. This Mus musculus (Mouse) protein is DAN domain family member 5 (Dand5).